The sequence spans 307 residues: Probable GTP 3',8-cyclase (307 aa).

A Radical SAM core domain is found at 4 to 222 (ALGREVRSVR…RTFHSREVYR (219 aa)). A GTP-binding site is contributed by Arg-13. Residues Cys-20 and Cys-24 each contribute to the [4Fe-4S] cluster site. Residue Tyr-26 coordinates S-adenosyl-L-methionine. Cys-27 is a binding site for [4Fe-4S] cluster. Lys-60 lines the GTP pocket. Gly-64 and Ser-112 together coordinate S-adenosyl-L-methionine. Lys-150 serves as a coordination point for GTP. Residues Cys-240 and Cys-243 each coordinate [4Fe-4S] cluster. 245–247 (RIR) lines the GTP pocket. Cys-257 contributes to the [4Fe-4S] cluster binding site.

Belongs to the radical SAM superfamily. MoaA family. The cofactor is [4Fe-4S] cluster.

It catalyses the reaction GTP + AH2 + S-adenosyl-L-methionine = (8S)-3',8-cyclo-7,8-dihydroguanosine 5'-triphosphate + 5'-deoxyadenosine + L-methionine + A + H(+). It functions in the pathway cofactor biosynthesis; molybdopterin biosynthesis. Functionally, catalyzes the cyclization of GTP to (8S)-3',8-cyclo-7,8-dihydroguanosine 5'-triphosphate. This chain is Probable GTP 3',8-cyclase, found in Methanopyrus kandleri (strain AV19 / DSM 6324 / JCM 9639 / NBRC 100938).